We begin with the raw amino-acid sequence, 65 residues long: Large ribosomal subunit protein bL35 (65 aa).

It belongs to the bacterial ribosomal protein bL35 family.

The protein is Large ribosomal subunit protein bL35 of Desulfitobacterium hafniense (strain DSM 10664 / DCB-2).